The primary structure comprises 187 residues: Threonylcarbamoyl-AMP synthase (187 aa).

The region spanning 4-187 (TLTLSEAVTA…DARSGHILRL (184 aa)) is the YrdC-like domain.

This sequence belongs to the SUA5 family. TsaC subfamily.

It localises to the cytoplasm. It catalyses the reaction L-threonine + hydrogencarbonate + ATP = L-threonylcarbamoyladenylate + diphosphate + H2O. In terms of biological role, required for the formation of a threonylcarbamoyl group on adenosine at position 37 (t(6)A37) in tRNAs that read codons beginning with adenine. Catalyzes the conversion of L-threonine, HCO(3)(-)/CO(2) and ATP to give threonylcarbamoyl-AMP (TC-AMP) as the acyladenylate intermediate, with the release of diphosphate. The polypeptide is Threonylcarbamoyl-AMP synthase (Xylella fastidiosa (strain 9a5c)).